The following is a 405-amino-acid chain: Imidazolonepropionase (405 aa).

H70 and H72 together coordinate Fe(3+). Zn(2+) is bound by residues H70 and H72. 3 residues coordinate 4-imidazolone-5-propanoate: R79, Y142, and H175. N-formimidoyl-L-glutamate is bound at residue Y142. H240 is a binding site for Fe(3+). H240 contacts Zn(2+). Q243 contributes to the 4-imidazolone-5-propanoate binding site. A Fe(3+)-binding site is contributed by D315. D315 contacts Zn(2+). N-formimidoyl-L-glutamate contacts are provided by N317 and G319. S320 is a binding site for 4-imidazolone-5-propanoate.

This sequence belongs to the metallo-dependent hydrolases superfamily. HutI family. Zn(2+) is required as a cofactor. The cofactor is Fe(3+).

The protein resides in the cytoplasm. The catalysed reaction is 4-imidazolone-5-propanoate + H2O = N-formimidoyl-L-glutamate. Its pathway is amino-acid degradation; L-histidine degradation into L-glutamate; N-formimidoyl-L-glutamate from L-histidine: step 3/3. Functionally, catalyzes the hydrolytic cleavage of the carbon-nitrogen bond in imidazolone-5-propanoate to yield N-formimidoyl-L-glutamate. It is the third step in the universal histidine degradation pathway. In Ruegeria sp. (strain TM1040) (Silicibacter sp.), this protein is Imidazolonepropionase.